We begin with the raw amino-acid sequence, 442 residues long: NADH-quinone oxidoreductase subunit D (442 aa).

Belongs to the complex I 49 kDa subunit family. In terms of assembly, NDH-1 is composed of 14 different subunits. Subunits NuoB, C, D, E, F, and G constitute the peripheral sector of the complex.

The protein localises to the cell membrane. The catalysed reaction is a quinone + NADH + 5 H(+)(in) = a quinol + NAD(+) + 4 H(+)(out). In terms of biological role, NDH-1 shuttles electrons from NADH, via FMN and iron-sulfur (Fe-S) centers, to quinones in the respiratory chain. The immediate electron acceptor for the enzyme in this species is believed to be a menaquinone. Couples the redox reaction to proton translocation (for every two electrons transferred, four hydrogen ions are translocated across the cytoplasmic membrane), and thus conserves the redox energy in a proton gradient. The chain is NADH-quinone oxidoreductase subunit D from Mycolicibacterium smegmatis (strain ATCC 700084 / mc(2)155) (Mycobacterium smegmatis).